Reading from the N-terminus, the 202-residue chain is Snake venom metalloproteinase Ac1 (202 aa).

Positions 6–202 (RYMEIVIVVD…ENPPCILNKP (197 aa)) constitute a Peptidase M12B domain. Positions 9 and 93 each coordinate Ca(2+). Intrachain disulfides connect C117–C197 and C157–C181. H142 is a binding site for Zn(2+). The active site involves E143. Positions 146 and 152 each coordinate Zn(2+). The Ca(2+) site is built by C197 and N200.

Belongs to the venom metalloproteinase (M12B) family. P-I subfamily. As to quaternary structure, monomer. Requires Zn(2+) as cofactor. Expressed by the venom gland.

The protein localises to the secreted. In terms of biological role, snake venom metalloproteinase that impairs hemostasis in the envenomed animal. In Deinagkistrodon acutus (Hundred-pace snake), this protein is Snake venom metalloproteinase Ac1.